The primary structure comprises 332 residues: L-lactate dehydrogenase A chain (332 aa).

Residue A2 is modified to N-acetylalanine. K5 is subject to N6-acetyllysine; alternate. K5 carries the post-translational modification N6-succinyllysine; alternate. K14 carries the post-translational modification N6-acetyllysine. An NAD(+)-binding site is contributed by 29-57 (GAVGMACAISILMKDLADELALVDVIEDK). K57 carries the N6-acetyllysine; alternate modification. K57 participates in a covalent cross-link: Glycyl lysine isopeptide (Lys-Gly) (interchain with G-Cter in SUMO2); alternate. K81 carries the N6-acetyllysine modification. Residue R99 coordinates NAD(+). Residue R106 participates in substrate binding. Residue K118 is modified to N6-acetyllysine; alternate. At K118 the chain carries N6-succinyllysine; alternate. K126 bears the N6-acetyllysine mark. Position 138 (N138) interacts with NAD(+). Substrate contacts are provided by N138 and R169. H193 acts as the Proton acceptor in catalysis. A Phosphoserine modification is found at S213. 2 positions are modified to N6-acetyllysine: K224 and K232. At Y239 the chain carries Phosphotyrosine. The residue at position 243 (K243) is an N6-acetyllysine. T248 is a substrate binding site. At T309 the chain carries Phosphothreonine. K318 is subject to N6-acetyllysine; alternate. K318 is modified (N6-succinyllysine; alternate). Residue T322 is modified to Phosphothreonine.

It belongs to the LDH/MDH superfamily. LDH family. Homotetramer. Interacts with PTEN upstream reading frame protein MP31. Post-translationally, ISGylated.

Its subcellular location is the cytoplasm. The enzyme catalyses (S)-lactate + NAD(+) = pyruvate + NADH + H(+). It functions in the pathway fermentation; pyruvate fermentation to lactate; (S)-lactate from pyruvate: step 1/1. Its function is as follows. Interconverts simultaneously and stereospecifically pyruvate and lactate with concomitant interconversion of NADH and NAD(+). The chain is L-lactate dehydrogenase A chain (Ldha) from Rattus norvegicus (Rat).